The primary structure comprises 629 residues: Phosphomethylpyrimidine synthase (629 aa).

Residues 1 to 30 (MTTKLKNASNLSESAQVDQQSVQPFTRSQK) form a disordered region. Substrate-binding positions include Asn-233, Met-262, Tyr-291, His-327, 347-349 (SRG), 388-391 (DGLR), and Glu-427. A Zn(2+)-binding site is contributed by His-431. Tyr-454 is a binding site for substrate. His-495 lines the Zn(2+) pocket. The [4Fe-4S] cluster site is built by Cys-575, Cys-578, and Cys-583.

The protein belongs to the ThiC family. In terms of assembly, homodimer. [4Fe-4S] cluster serves as cofactor.

It carries out the reaction 5-amino-1-(5-phospho-beta-D-ribosyl)imidazole + S-adenosyl-L-methionine = 4-amino-2-methyl-5-(phosphooxymethyl)pyrimidine + CO + 5'-deoxyadenosine + formate + L-methionine + 3 H(+). The protein operates within cofactor biosynthesis; thiamine diphosphate biosynthesis. In terms of biological role, catalyzes the synthesis of the hydroxymethylpyrimidine phosphate (HMP-P) moiety of thiamine from aminoimidazole ribotide (AIR) in a radical S-adenosyl-L-methionine (SAM)-dependent reaction. The protein is Phosphomethylpyrimidine synthase of Pseudomonas fluorescens (strain ATCC BAA-477 / NRRL B-23932 / Pf-5).